A 276-amino-acid polypeptide reads, in one-letter code: NH(3)-dependent NAD(+) synthetase (276 aa).

43-50 (GISGGVDS) contacts ATP. Asp-49 is a binding site for Mg(2+). A deamido-NAD(+)-binding site is contributed by Arg-146. Thr-166 is a binding site for ATP. Residue Glu-171 coordinates Mg(2+). Positions 179 and 186 each coordinate deamido-NAD(+). Residues Lys-195 and Thr-217 each coordinate ATP. 266 to 267 (HK) contributes to the deamido-NAD(+) binding site.

It belongs to the NAD synthetase family. In terms of assembly, homodimer.

It catalyses the reaction deamido-NAD(+) + NH4(+) + ATP = AMP + diphosphate + NAD(+) + H(+). Its pathway is cofactor biosynthesis; NAD(+) biosynthesis; NAD(+) from deamido-NAD(+) (ammonia route): step 1/1. In terms of biological role, catalyzes the ATP-dependent amidation of deamido-NAD to form NAD. Uses ammonia as a nitrogen source. The protein is NH(3)-dependent NAD(+) synthetase of Vibrio atlanticus (strain LGP32) (Vibrio splendidus (strain Mel32)).